The chain runs to 252 residues: Imidazole glycerol phosphate synthase subunit HisF (252 aa).

Active-site residues include aspartate 11 and aspartate 130.

It belongs to the HisA/HisF family. In terms of assembly, heterodimer of HisH and HisF.

It localises to the cytoplasm. It carries out the reaction 5-[(5-phospho-1-deoxy-D-ribulos-1-ylimino)methylamino]-1-(5-phospho-beta-D-ribosyl)imidazole-4-carboxamide + L-glutamine = D-erythro-1-(imidazol-4-yl)glycerol 3-phosphate + 5-amino-1-(5-phospho-beta-D-ribosyl)imidazole-4-carboxamide + L-glutamate + H(+). The protein operates within amino-acid biosynthesis; L-histidine biosynthesis; L-histidine from 5-phospho-alpha-D-ribose 1-diphosphate: step 5/9. Functionally, IGPS catalyzes the conversion of PRFAR and glutamine to IGP, AICAR and glutamate. The HisF subunit catalyzes the cyclization activity that produces IGP and AICAR from PRFAR using the ammonia provided by the HisH subunit. In Geobacillus kaustophilus (strain HTA426), this protein is Imidazole glycerol phosphate synthase subunit HisF.